A 428-amino-acid chain; its full sequence is GTPase Obg (428 aa).

Residues 1–158 (MFVDQTKIDV…RTLRLELKVL (158 aa)) enclose the Obg domain. The OBG-type G domain maps to 159–328 (ADVGLVGFPS…LMGKTADLVE (170 aa)). Residues 165-172 (GFPSVGKS), 190-194 (FTTLT), 212-215 (DLPG), 282-285 (TQMD), and 309-311 (SSV) each bind GTP. Mg(2+) is bound by residues serine 172 and threonine 192. Positions 350-428 (YKKPEDEGFK…IADFTFEFVD (79 aa)) constitute an OCT domain.

This sequence belongs to the TRAFAC class OBG-HflX-like GTPase superfamily. OBG GTPase family. In terms of assembly, monomer. The cofactor is Mg(2+).

It is found in the cytoplasm. Its function is as follows. An essential GTPase which binds GTP, GDP and possibly (p)ppGpp with moderate affinity, with high nucleotide exchange rates and a fairly low GTP hydrolysis rate. Plays a role in control of the cell cycle, stress response, ribosome biogenesis and in those bacteria that undergo differentiation, in morphogenesis control. This is GTPase Obg from Lactobacillus johnsonii (strain CNCM I-12250 / La1 / NCC 533).